The chain runs to 206 residues: Translation initiation factor IF-3 (206 aa).

It belongs to the IF-3 family. As to quaternary structure, monomer.

It is found in the cytoplasm. Its function is as follows. IF-3 binds to the 30S ribosomal subunit and shifts the equilibrium between 70S ribosomes and their 50S and 30S subunits in favor of the free subunits, thus enhancing the availability of 30S subunits on which protein synthesis initiation begins. The sequence is that of Translation initiation factor IF-3 from Chlorobium luteolum (strain DSM 273 / BCRC 81028 / 2530) (Pelodictyon luteolum).